Consider the following 565-residue polypeptide: MARIRVLDADTVSRIAAGEVVERPAAVVKELVENALDAGARVVHIDIAAGGLERITVTDDGCGMEPGDAELALQRHATSKITAAEDLEAVRTLGFRGEALPSIAAVSRLTLRTRPAASSAGTVLETEGGLVLSAGVSGGPPGTVVTVRDLFFNTPARKKFVRSAAHEGAMISEMVGRLALSRPEVAFRLTVNGRQVLATSGSGDLLDAIGAVFGAAVAREMVPVRFEERGLGVSGYVGRPGVSRSSRRHQVFFVNGRYIRSAYLGAAAEESLHGAMPAGRHAVLVLHLSVEPGMVDVNVHPAKHEVRFSQPRDVYVVVHRAVREALHREIQIPVEECGHLESACFPGAGTGFRIPVQVTFQGGEPELREESTGYQGFPQLQPLGFLPPAYILAGGADGLYILDQHAAHERVLFEQYLRTLEQSAGKQLLVPVMVEIRGREAQTLEDYGPFLRQAGFEVDPFGEGAYLIRTVPSFLRPGAEAVLLTDVLDRLAGERPVDADAFRRVVAAVLACHRAVRGGDKPAGPEAAALLTDLGRCAEPYLCPHGRPTLIRIGFPELARRFQRE.

This sequence belongs to the DNA mismatch repair MutL/HexB family.

Its function is as follows. This protein is involved in the repair of mismatches in DNA. It is required for dam-dependent methyl-directed DNA mismatch repair. May act as a 'molecular matchmaker', a protein that promotes the formation of a stable complex between two or more DNA-binding proteins in an ATP-dependent manner without itself being part of a final effector complex. In Desulforudis audaxviator (strain MP104C), this protein is DNA mismatch repair protein MutL.